Here is a 123-residue protein sequence, read N- to C-terminus: Small ribosomal subunit protein uS12 (123 aa).

It belongs to the universal ribosomal protein uS12 family. As to quaternary structure, part of the 30S ribosomal subunit. Contacts proteins S8 and S17. May interact with IF1 in the 30S initiation complex.

Its function is as follows. With S4 and S5 plays an important role in translational accuracy. Functionally, interacts with and stabilizes bases of the 16S rRNA that are involved in tRNA selection in the A site and with the mRNA backbone. Located at the interface of the 30S and 50S subunits, it traverses the body of the 30S subunit contacting proteins on the other side and probably holding the rRNA structure together. The combined cluster of proteins S8, S12 and S17 appears to hold together the shoulder and platform of the 30S subunit. This is Small ribosomal subunit protein uS12 from Corynebacterium diphtheriae (strain ATCC 700971 / NCTC 13129 / Biotype gravis).